The primary structure comprises 337 residues: tRNA N6-adenosine threonylcarbamoyltransferase (337 aa).

Residues H111 and H115 each contribute to the Fe cation site. Substrate contacts are provided by residues L134–G138, D167, G180, and N272. Position 300 (D300) interacts with Fe cation.

It belongs to the KAE1 / TsaD family. The cofactor is Fe(2+).

Its subcellular location is the cytoplasm. It carries out the reaction L-threonylcarbamoyladenylate + adenosine(37) in tRNA = N(6)-L-threonylcarbamoyladenosine(37) in tRNA + AMP + H(+). Functionally, required for the formation of a threonylcarbamoyl group on adenosine at position 37 (t(6)A37) in tRNAs that read codons beginning with adenine. Is involved in the transfer of the threonylcarbamoyl moiety of threonylcarbamoyl-AMP (TC-AMP) to the N6 group of A37, together with TsaE and TsaB. TsaD likely plays a direct catalytic role in this reaction. This chain is tRNA N6-adenosine threonylcarbamoyltransferase, found in Aeromonas salmonicida (strain A449).